A 446-amino-acid chain; its full sequence is White-opaque regulator 2 (446 aa).

Residues 1 to 24 (MTQLPSVSELINRTGSIGSSSNIT) are compositionally biased toward polar residues. The interval 1–203 (MTQLPSVSEL…QPNFPYHNNF (203 aa)) is disordered. Over residues 30 to 64 (TTTSATNTTTAATATTVTSTTPRSENSYSPNSPYS) the composition is skewed to low complexity. Residues 67-86 (TRPSNTSLTNYSAGSGITVA) are compositionally biased toward polar residues. Composition is skewed to low complexity over residues 87 to 97 (SSSFQFSQPSP) and 104 to 120 (STSSQSSSGDSFQQHQS). The segment covering 121–144 (NPSGVSMSSNTSPRTSIVQSMSSV) has biased composition (polar residues). A compositionally biased stretch (pro residues) spans 166–184 (VQPPPQQQQLQQPPPPPPQ). Low complexity predominate over residues 185 to 195 (QQQHIYPQQQP). The zn(2)-C6 fungal-type DNA-binding region spans 305–332 (CLTCRKRRIKCDERKPTCFNCERSKKSC). A disordered region spans residues 336–402 (QDLSKLPPRK…SGSSTNSRNL (67 aa)). A compositionally biased stretch (low complexity) spans 358–369 (NQQQQQQQQNQQ). Positions 387-401 (HQITSISGSSTNSRN) are enriched in polar residues.

It is found in the nucleus. Functionally, transcriptional regulator of the switch between 2 heritable states, the white and opaque states. These 2 cell types differ in many characteristics, including cell structure, mating competence, and virulence. Each state is heritable for many generations, and switching between states occurs stochastically, at low frequency. WOR2 is necessary for the stability of the opaque state phenotypic switching from the white to the opaque phase is a necessary step for mating. Plays a role in cell adhesion and pseudohyphal growth. The chain is White-opaque regulator 2 (WOR2) from Candida albicans (strain SC5314 / ATCC MYA-2876) (Yeast).